The following is a 629-amino-acid chain: Probable potassium transport system protein Kup 3 (629 aa).

The next 12 membrane-spanning stretches (helical) occupy residues 20 to 40, 54 to 74, 106 to 126, 143 to 163, 171 to 191, 212 to 232, 253 to 273, 291 to 311, 343 to 363, 372 to 392, 400 to 420, and 425 to 445; these read LSLS…LYTF, VTTI…IASV, PFII…GTIT, PSLK…LFAI, IGKA…ILGA, FLFS…LCVT, WFGL…ALVL, FLLP…QAII, IYIG…IIGF, AYGI…FIAL, IIKS…FFAA, and FING…MMYI.

The protein belongs to the HAK/KUP transporter (TC 2.A.72) family.

It localises to the cell inner membrane. It catalyses the reaction K(+)(in) + H(+)(in) = K(+)(out) + H(+)(out). In terms of biological role, transport of potassium into the cell. Likely operates as a K(+):H(+) symporter. The polypeptide is Probable potassium transport system protein Kup 3 (Legionella pneumophila (strain Corby)).